A 674-amino-acid polypeptide reads, in one-letter code: Sodium/myo-inositol cotransporter 2 (674 aa).

The Extracellular portion of the chain corresponds to 1–27 (MESSTSSPQPPLSDPLDPFPQRSLEPG). The chain crosses the membrane as a helical span at residues 28 to 48 (DIAVLVLYFLFVLAVGLWSTV). Over 49–56 (KTKRDTVK) the chain is Cytoplasmic. Residues 57–77 (GYFLAGGDMVWWPVGASLFAS) traverse the membrane as a helical segment. Residues 78 to 102 (NVGSGHFVGLAGSGAATGISVAAYE) are Extracellular-facing. Residues 103–123 (FNGMFSVLMLAWIFLPIYIAG) form a helical membrane-spanning segment. Residues 124–140 (QVTTMPEYLRRRFGGSR) are Cytoplasmic-facing. Residues 141-161 (IAITLAVLYLFIYIFTKISVD) traverse the membrane as a helical segment. Residues 162-180 (MYAGAIFIQQSLHLDLYLS) lie on the Extracellular side of the membrane. The chain crosses the membrane as a helical span at residues 181-201 (VVGLLAVTALYTVAGGLAAVI). At 202–208 (YTDALQT) the chain is on the cytoplasmic side. A helical membrane pass occupies residues 209–229 (LIMLVGALTLMGYSFAAVGGM). At 230 to 272 (EGLQEKYFLALPSNRSENSSCGLPREDAFHLFRDPLTSDLPWP) the chain is on the extracellular side. Residues 273–293 (GILFGMSIPSLWYWCTDQVIV) traverse the membrane as a helical segment. Topologically, residues 294–308 (QRSLAAKNLSHAKGG) are cytoplasmic. Residues 309-329 (SLMAAYLKVLPLFIMVFPGMV) traverse the membrane as a helical segment. Residues 330–375 (SRILFPDQVACADPETCQRVCNNPSGCSDIAYPKLVLELLPTGLRG) are Extracellular-facing. A helical membrane pass occupies residues 376-396 (LMMAVMVAALMSSLTSIFNSA). Residues 397 to 418 (STIFTMDLWNHVRPRASEKELM) are Cytoplasmic-facing. Residues 419 to 439 (IVGRVFVLLLVLVSVLWIPVV) form a helical membrane-spanning segment. The Extracellular portion of the chain corresponds to 440 to 446 (QASQGGQ). Residues 447 to 467 (LFVYIQAISSYLQPPVAMVFV) traverse the membrane as a helical segment. Topologically, residues 468–479 (LGCFWKRANEKG) are cytoplasmic. A helical transmembrane segment spans residues 480-500 (AFWGLVLGLLLGFIRLILDFI). The Extracellular portion of the chain corresponds to 501–521 (YVEPACHQPDERPSVVKNVHY). A helical membrane pass occupies residues 522 to 542 (LYFSMILSSVTVLTVTVMSLL). Topologically, residues 543 to 653 (TEPPSKEMIS…SIEENPVVKT (111 aa)) are cytoplasmic. A helical transmembrane segment spans residues 654–674 (LLDVNCLLCICCAFFLWGYFA).

Belongs to the sodium:solute symporter (SSF) (TC 2.A.21) family. Expressed in brain, lung and kidney. In the kidney, strongly expressed in the cortex, at the luminal side of proximal convoluted tubules and in BBMVs. Weaker expression observed in the medulla (at protein level).

It localises to the membrane. Its subcellular location is the apical cell membrane. It carries out the reaction myo-inositol(out) + 2 Na(+)(out) = myo-inositol(in) + 2 Na(+)(in). The enzyme catalyses 1D-chiro-inositol(out) + 2 Na(+)(out) = 1D-chiro-inositol(in) + 2 Na(+)(in). It catalyses the reaction D-glucose(out) + 2 Na(+)(out) = D-glucose(in) + 2 Na(+)(in). The catalysed reaction is D-xylose(out) + 2 Na(+)(out) = D-xylose(in) + 2 Na(+)(in). Its activity is regulated as follows. MI transport activity stimulated five-fold under 24 hour hypertonic shock conditions. MI inward currents were gradually inhibited as increasing amounts of phlorizin were added to the superfusion medium. When sodium is replaced by potassium, MI uptake is dramatically reduced and in the presence of L-fucose or D-chiro-inositol (DCI), the specific accumulation of tracer amounts of MI is also reduced. In terms of biological role, involved in the sodium-dependent cotransport of myo-inositol (MI) with a Na(+):MI stoichiometry of 2:1. Exclusively responsible for apical MI transport and absorption in intestine. Can also transport D-chiro-inositol (DCI) but not L-fucose. Exhibits stereospecific cotransport of both D-glucose and D-xylose. May induce apoptosis through the TNF-alpha, PDCD1 pathway. May play a role in the regulation of MI concentration in serum, involving reabsorption in at least the proximal tubule of the kidney. In Oryctolagus cuniculus (Rabbit), this protein is Sodium/myo-inositol cotransporter 2.